Reading from the N-terminus, the 857-residue chain is MNSRYSPADLEQRWQTTWRSEGLDVTPEPEDGKGFYALSMFPYPSGTLHMGHVRNYVITDVIARVQRMRGHSVLHPMGWDAFGLPAENAAIERNVDPGDWTDRNIDQMRSQLDRLGLSIDWDREQATCHSDYYRWTQWLFLELFDGGLAYRKNATVNWDPVDQTVLANEQVDADGRSWRSGALVEQRQLNQWFLRITQYAEALLNDLDQLSGWPERVRTMQANWIGRSEGAEIQFKVSSDSDTTITVFTTRPDTLAGASCVVLAPDHPLVNSLTSPDQQDVVQAFQAEVARLSALERTSDDAPKRGVFTGATVLNPLNGRALPVWIADYVLVDYGTGAVMGVPAHDQRDRRFAQSYGLAVQQVIEAEGAAAAIAAGEAWTDPGVLIHSGDFDGLNSIEAKERITRHGEQQGWAVAKVTYRLRDWLISRQRYWGCPIPIIHCPSCGAVPVPREDLPVVLPRGIDLSGKGGSPLEQQQDWVNVPCPSCGEPAKRETDTMDTFMCSSWYFLRFADPHNTEQPFSREAVNRWLPVQQYVGGIEHAILHLLYSRFFTKALKDRGLIDVAEPFDRLLTQGMVQGTTYRNPSTGKYVASADVSDPETPTDPTSGEPLEVLFEKMSKSKYNGVDPAAVIDRYGADTARMFILFKAPPEKDLEWDDSDVEGQFRFLQRIWRLVESADSRIDSLEPEERPEPLADTDAKVRRAIHIAIDAVSEDLQDEIQLNTAISELMKLTNAITSVGVAELSTSVLKEALSTLLRLLAPFAPHLAEELWHQLGGTSSVHRAGWPELDPSALVQDSVDLVIQIKGKVRGTIQVPAAADKEQLEALALASEIAAKWLEGHPPRRVIVVPGKLVNLVP.

A 'HIGH' region motif is present at residues 42–52 (PYPSGTLHMGH). A 'KMSKS' region motif is present at residues 616-620 (KMSKS). Residue Lys-619 participates in ATP binding.

Belongs to the class-I aminoacyl-tRNA synthetase family.

Its subcellular location is the cytoplasm. It catalyses the reaction tRNA(Leu) + L-leucine + ATP = L-leucyl-tRNA(Leu) + AMP + diphosphate. This is Leucine--tRNA ligase from Parasynechococcus marenigrum (strain WH8102).